Consider the following 208-residue polypeptide: Thiamine-phosphate synthase (208 aa).

4-amino-2-methyl-5-(diphosphooxymethyl)pyrimidine is bound by residues 36 to 40 (QLRMK) and aspartate 68. The Mg(2+) site is built by aspartate 69 and aspartate 88. Threonine 107 is a 4-amino-2-methyl-5-(diphosphooxymethyl)pyrimidine binding site. 133 to 135 (TTT) is a 2-[(2R,5Z)-2-carboxy-4-methylthiazol-5(2H)-ylidene]ethyl phosphate binding site. 4-amino-2-methyl-5-(diphosphooxymethyl)pyrimidine is bound at residue lysine 136. Residue glycine 169 participates in 2-[(2R,5Z)-2-carboxy-4-methylthiazol-5(2H)-ylidene]ethyl phosphate binding.

The protein belongs to the thiamine-phosphate synthase family. It depends on Mg(2+) as a cofactor.

The catalysed reaction is 2-[(2R,5Z)-2-carboxy-4-methylthiazol-5(2H)-ylidene]ethyl phosphate + 4-amino-2-methyl-5-(diphosphooxymethyl)pyrimidine + 2 H(+) = thiamine phosphate + CO2 + diphosphate. It carries out the reaction 2-(2-carboxy-4-methylthiazol-5-yl)ethyl phosphate + 4-amino-2-methyl-5-(diphosphooxymethyl)pyrimidine + 2 H(+) = thiamine phosphate + CO2 + diphosphate. The enzyme catalyses 4-methyl-5-(2-phosphooxyethyl)-thiazole + 4-amino-2-methyl-5-(diphosphooxymethyl)pyrimidine + H(+) = thiamine phosphate + diphosphate. The protein operates within cofactor biosynthesis; thiamine diphosphate biosynthesis; thiamine phosphate from 4-amino-2-methyl-5-diphosphomethylpyrimidine and 4-methyl-5-(2-phosphoethyl)-thiazole: step 1/1. Condenses 4-methyl-5-(beta-hydroxyethyl)thiazole monophosphate (THZ-P) and 2-methyl-4-amino-5-hydroxymethyl pyrimidine pyrophosphate (HMP-PP) to form thiamine monophosphate (TMP). This Phocaeicola vulgatus (strain ATCC 8482 / DSM 1447 / JCM 5826 / CCUG 4940 / NBRC 14291 / NCTC 11154) (Bacteroides vulgatus) protein is Thiamine-phosphate synthase.